The sequence spans 163 residues: Large ribosomal subunit protein uL10 (163 aa).

This sequence belongs to the universal ribosomal protein uL10 family. As to quaternary structure, part of the ribosomal stalk of the 50S ribosomal subunit. The N-terminus interacts with L11 and the large rRNA to form the base of the stalk. The C-terminus forms an elongated spine to which L12 dimers bind in a sequential fashion forming a multimeric L10(L12)X complex.

Functionally, forms part of the ribosomal stalk, playing a central role in the interaction of the ribosome with GTP-bound translation factors. This Mannheimia succiniciproducens (strain KCTC 0769BP / MBEL55E) protein is Large ribosomal subunit protein uL10.